A 455-amino-acid chain; its full sequence is UPF0210 protein Teth514_2074 (455 aa).

It belongs to the UPF0210 family. Homodimer.

The protein is UPF0210 protein Teth514_2074 of Thermoanaerobacter sp. (strain X514).